We begin with the raw amino-acid sequence, 89 residues long: UPF0250 protein Bphy_0213 (89 aa).

The protein belongs to the UPF0250 family.

In Paraburkholderia phymatum (strain DSM 17167 / CIP 108236 / LMG 21445 / STM815) (Burkholderia phymatum), this protein is UPF0250 protein Bphy_0213.